We begin with the raw amino-acid sequence, 128 residues long: Aspartate 1-decarboxylase (128 aa).

Serine 25 (schiff-base intermediate with substrate; via pyruvic acid) is an active-site residue. Serine 25 carries the post-translational modification Pyruvic acid (Ser). Threonine 57 is a binding site for substrate. The active-site Proton donor is tyrosine 58. 73 to 75 (GSA) provides a ligand contact to substrate.

The protein belongs to the PanD family. In terms of assembly, heterooctamer of four alpha and four beta subunits. Requires pyruvate as cofactor. Is synthesized initially as an inactive proenzyme, which is activated by self-cleavage at a specific serine bond to produce a beta-subunit with a hydroxyl group at its C-terminus and an alpha-subunit with a pyruvoyl group at its N-terminus.

It is found in the cytoplasm. The catalysed reaction is L-aspartate + H(+) = beta-alanine + CO2. It participates in cofactor biosynthesis; (R)-pantothenate biosynthesis; beta-alanine from L-aspartate: step 1/1. Its function is as follows. Catalyzes the pyruvoyl-dependent decarboxylation of aspartate to produce beta-alanine. The protein is Aspartate 1-decarboxylase of Paraburkholderia phymatum (strain DSM 17167 / CIP 108236 / LMG 21445 / STM815) (Burkholderia phymatum).